The following is a 257-amino-acid chain: Geranylgeranylglyceryl phosphate synthase (257 aa).

Mg(2+) is bound by residues Asp27 and Thr57. Residues 175-181 (YLEAGSG), 207-208 (GG), and 229-230 (GN) contribute to the sn-glycerol 1-phosphate site.

This sequence belongs to the GGGP/HepGP synthase family. Group II subfamily. The cofactor is Mg(2+).

It is found in the cytoplasm. It carries out the reaction sn-glycerol 1-phosphate + (2E,6E,10E)-geranylgeranyl diphosphate = sn-3-O-(geranylgeranyl)glycerol 1-phosphate + diphosphate. The protein operates within membrane lipid metabolism; glycerophospholipid metabolism. Its function is as follows. Prenyltransferase that catalyzes the transfer of the geranylgeranyl moiety of geranylgeranyl diphosphate (GGPP) to the C3 hydroxyl of sn-glycerol-1-phosphate (G1P). This reaction is the first ether-bond-formation step in the biosynthesis of archaeal membrane lipids. In Sulfolobus acidocaldarius (strain ATCC 33909 / DSM 639 / JCM 8929 / NBRC 15157 / NCIMB 11770), this protein is Geranylgeranylglyceryl phosphate synthase.